The following is a 546-amino-acid chain: Tyrosine-protein kinase yes (546 aa).

The segment covering 1 to 18 (MGCVKSKEDKGPTQKYRP) has biased composition (basic and acidic residues). Positions 1-58 (MGCVKSKEDKGPTQKYRPDPTNPTPGSHMGLYGPDPTQMGQSPALKGPTNNYNSRSSG) are disordered. Residue Gly2 is the site of N-myristoyl glycine attachment. Cys3 carries S-palmitoyl cysteine; in membrane form lipidation. The segment covering 48-58 (PTNNYNSRSSG) has biased composition (polar residues). The region spanning 94–155 (GGVTFFVALY…PSNYVAPADS (62 aa)) is the SH3 domain. One can recognise an SH2 domain in the interval 161–258 (WYFGKMGRKD…GLCYRLTTVC (98 aa)). Residues 280-533 (LRLELKLGQG…YIQSFLEDYF (254 aa)) enclose the Protein kinase domain. ATP is bound by residues 286–294 (LGQGCFGEV) and Lys308. Residue Asp399 is the Proton acceptor of the active site. Residue Tyr429 is modified to Phosphotyrosine; by autocatalysis. Phosphotyrosine; by CSK is present on Tyr540.

Belongs to the protein kinase superfamily. Tyr protein kinase family. SRC subfamily. Post-translationally, autophosphorylation at Tyr-429 maintains enzyme activity. In terms of processing, palmitoylation at Cys-3 promotes membrane localization. As to expression, widely expressed.

The protein localises to the cell membrane. The protein resides in the cytoplasm. It is found in the cytoskeleton. Its subcellular location is the microtubule organizing center. It localises to the centrosome. The protein localises to the cytosol. The protein resides in the cell junction. The catalysed reaction is L-tyrosyl-[protein] + ATP = O-phospho-L-tyrosyl-[protein] + ADP + H(+). In terms of biological role, non-receptor protein tyrosine kinase that is involved in the regulation of cell growth and survival, apoptosis, cell-cell adhesion, cytoskeleton remodeling, differentiation, G2/M progression and cytokinesis. Required for convergent extension cell movements during gastrulation, acting with fyna via rhoa. May be required for epiboly to occur, possibly through its effects in calcium signaling. During embryonic development, phosphorylates ptk2.1/fak. The polypeptide is Tyrosine-protein kinase yes (yes1) (Danio rerio (Zebrafish)).